A 455-amino-acid chain; its full sequence is Pup--protein ligase (455 aa).

Residue Glu10 participates in Mg(2+) binding. Arg55 is a binding site for ATP. Tyr57 lines the Mg(2+) pocket. The active-site Proton acceptor is the Asp59. Residue Glu65 participates in Mg(2+) binding. Thr68 and Trp422 together coordinate ATP.

It belongs to the Pup ligase/Pup deamidase family. Pup-conjugating enzyme subfamily.

The catalysed reaction is ATP + [prokaryotic ubiquitin-like protein]-L-glutamate + [protein]-L-lysine = ADP + phosphate + N(6)-([prokaryotic ubiquitin-like protein]-gamma-L-glutamyl)-[protein]-L-lysine.. It functions in the pathway protein degradation; proteasomal Pup-dependent pathway. It participates in protein modification; protein pupylation. Catalyzes the covalent attachment of the prokaryotic ubiquitin-like protein modifier Pup to the proteasomal substrate proteins, thereby targeting them for proteasomal degradation. This tagging system is termed pupylation. The ligation reaction involves the side-chain carboxylate of the C-terminal glutamate of Pup and the side-chain amino group of a substrate lysine. This Sanguibacter keddieii (strain ATCC 51767 / DSM 10542 / NCFB 3025 / ST-74) protein is Pup--protein ligase.